The sequence spans 346 residues: Flap endonuclease 1 (346 aa).

The segment at 1 to 102 (MGVTELGKLI…AEIEERRKAK (102 aa)) is N-domain. Positions 31, 84, 156, 158, 177, 179, and 239 each coordinate Mg(2+). Positions 120-261 (EVAKYAKRAI…RALKLIWEFG (142 aa)) are I-domain.

The protein belongs to the XPG/RAD2 endonuclease family. FEN1 subfamily. As to quaternary structure, interacts with PCNA. PCNA stimulates the nuclease activity without altering cleavage specificity. Mg(2+) serves as cofactor.

Functionally, structure-specific nuclease with 5'-flap endonuclease and 5'-3' exonuclease activities involved in DNA replication and repair. During DNA replication, cleaves the 5'-overhanging flap structure that is generated by displacement synthesis when DNA polymerase encounters the 5'-end of a downstream Okazaki fragment. Binds the unpaired 3'-DNA end and kinks the DNA to facilitate 5' cleavage specificity. Cleaves one nucleotide into the double-stranded DNA from the junction in flap DNA, leaving a nick for ligation. Also involved in the base excision repair (BER) pathway. Acts as a genome stabilization factor that prevents flaps from equilibrating into structures that lead to duplications and deletions. Also possesses 5'-3' exonuclease activity on nicked or gapped double-stranded DNA. The polypeptide is Flap endonuclease 1 (Pyrobaculum arsenaticum (strain DSM 13514 / JCM 11321 / PZ6)).